The sequence spans 308 residues: Snake venom metalloprotease inhibitor 02D01 (308 aa).

Positions 1–23 are cleaved as a signal peptide; it reads MFVSRLAASGLLLLSLLALSLDG. Residues 24-38 constitute a propeptide that is removed on maturation; that stretch reads KPLPQRQPHHIQPME. The residue at position 39 (Gln-39) is a Pyrrolidone carboxylic acid. A propeptide spanning residues 42-50 is cleaved from the precursor; sequence LAPDAPPLE. A Pyrrolidone carboxylic acid modification is found at Gln-51. The propeptide occupies 54 to 62; sequence LAPDAPPLE. Gln-63 carries the post-translational modification Pyrrolidone carboxylic acid. The propeptide occupies 66–74; it reads LAPAAPPLE. Pyrrolidone carboxylic acid is present on Gln-75. The propeptide occupies 78 to 86; the sequence is LAPDAPPME. Gln-87 is modified (pyrrolidone carboxylic acid). Positions 90 to 98 are excised as a propeptide; that stretch reads LAPDAPPME. Gln-99 is subject to Pyrrolidone carboxylic acid. Residues 102 to 110 constitute a propeptide that is removed on maturation; sequence LAPDAPPME. At Gln-111 the chain carries Pyrrolidone carboxylic acid. The propeptide occupies 114 to 122; sequence LAPDAPPME. Residue Gln-123 is modified to Pyrrolidone carboxylic acid. Positions 126–134 are excised as a propeptide; sequence LAPDAAPLE. Gln-135 carries the post-translational modification Pyrrolidone carboxylic acid. A propeptide spanning residues 138–146 is cleaved from the precursor; it reads LAPDAPPME. At Gln-147 the chain carries Pyrrolidone carboxylic acid. Positions 150 to 158 are excised as a propeptide; it reads LAPDAPPME. Gln-159 is modified (pyrrolidone carboxylic acid). Residues 162–249 constitute a propeptide that is removed on maturation; the sequence is QPQIPSLMEQ…KQASQKWGRL (88 aa). Residues 172–182 are compositionally biased toward polar residues; sequence RQLSSGGTTAL. Disordered regions lie at residues 172-228 and 252-279; these read RQLS…AAAT and HDHD…GARR. Gly residues predominate over residues 198 to 209; that stretch reads VVGGGGGGGGGS. The span at 210–227 shows a compositional bias: low complexity; it reads KAALALPKPPKAKGAAAA. Gly residues predominate over residues 265-277; the sequence is SVGGGGGGGGGGA. A propeptide spanning residues 278–286 is cleaved from the precursor; sequence RRLKGLAKK. Cys-292 and Cys-308 form a disulfide bridge.

This sequence in the C-terminal section; belongs to the natriuretic peptide family. The protein in the central section; belongs to the pHpG family. Expressed by the venom gland.

Its subcellular location is the secreted. Functionally, pEKW and poly-His-poly-Gly peptides may serve as metalloproteinase inhibitors during glandular storage. Their inhibition may be instantly disengaged, by dilution or physiochemical change, when venom is injected into tissue of the prey. Has a vasorelaxant activity in rat aortic strips and a diuretic potency in anesthetized rats. May act by activating natriuretic receptors (NPR1 and/or NPR2). The sequence is that of Snake venom metalloprotease inhibitor 02D01 from Echis ocellatus (Ocellated saw-scaled viper).